Here is a 230-residue protein sequence, read N- to C-terminus: LexA repressor (230 aa).

Residues 1 to 21 (MSDDSSETRTGGRRGADAGLT) are disordered. The H-T-H motif DNA-binding region spans 44 to 64 (IREIGDAVGLTSTSSVAHQLR). Active-site for autocatalytic cleavage activity residues include serine 154 and lysine 191.

The protein belongs to the peptidase S24 family. As to quaternary structure, homodimer.

It carries out the reaction Hydrolysis of Ala-|-Gly bond in repressor LexA.. Functionally, represses a number of genes involved in the response to DNA damage (SOS response), including recA and lexA. In the presence of single-stranded DNA, RecA interacts with LexA causing an autocatalytic cleavage which disrupts the DNA-binding part of LexA, leading to derepression of the SOS regulon and eventually DNA repair. In Mycobacterium sp. (strain JLS), this protein is LexA repressor.